A 296-amino-acid polypeptide reads, in one-letter code: Cutinase est1 (296 aa).

The first 35 residues, 1 to 35 (MSVTTPRREASLLSRAVAVAAAAAATVALAAPAQA), serve as a signal peptide directing secretion. A disordered region spans residues 36-57 (ANPYERGPNPTESMLEARSGPF). Tyr-95 serves as a coordination point for poly(ethylene terephthalate). The Nucleophile role is filled by Ser-165. The poly(ethylene terephthalate) site is built by Met-166 and Trp-190. Residues Asp-211 and His-243 each act as charge relay system in the active site. The cysteines at positions 276 and 294 are disulfide-linked.

It belongs to the AB hydrolase superfamily. In terms of assembly, monomer.

It localises to the secreted. It is found in the periplasm. The catalysed reaction is (ethylene terephthalate)(n) + H2O = (ethylene terephthalate)(n-1) + 4-[(2-hydroxyethoxy)carbonyl]benzoate + H(+). It carries out the reaction a butanoate ester + H2O = an aliphatic alcohol + butanoate + H(+). The enzyme catalyses cutin + H2O = cutin monomers.. Its function is as follows. Catalyzes the hydrolysis of cutin, a polyester that forms the structure of plant cuticle. Shows esterase activity towards p-nitrophenol-linked aliphatic esters (pNP-aliphatic esters). Capable of degrading the plastic poly(ethylene terephthalate) (PET), the most abundant polyester plastic in the world. Can also depolymerize the synthetic polyester poly(epsilon-caprolactone) (PCL). This chain is Cutinase est1, found in Thermobifida alba (Thermomonospora alba).